A 367-amino-acid polypeptide reads, in one-letter code: tRNA-specific 2-thiouridylase MnmA (367 aa).

ATP contacts are provided by residues 10–17 (AMSGGVDS) and M36. The active-site Nucleophile is the C106. C106 and C204 are oxidised to a cystine. G130 is a binding site for ATP. The segment at 154–156 (KDQ) is interaction with tRNA. Residue C204 is the Cysteine persulfide intermediate of the active site. Positions 310-311 (RY) are interaction with tRNA.

Belongs to the MnmA/TRMU family.

It is found in the cytoplasm. The catalysed reaction is S-sulfanyl-L-cysteinyl-[protein] + uridine(34) in tRNA + AH2 + ATP = 2-thiouridine(34) in tRNA + L-cysteinyl-[protein] + A + AMP + diphosphate + H(+). In terms of biological role, catalyzes the 2-thiolation of uridine at the wobble position (U34) of tRNA, leading to the formation of s(2)U34. This is tRNA-specific 2-thiouridylase MnmA from Desulforamulus reducens (strain ATCC BAA-1160 / DSM 100696 / MI-1) (Desulfotomaculum reducens).